A 434-amino-acid chain; its full sequence is Tyrosine-protein phosphatase non-receptor type 1 (434 aa).

The 275-residue stretch at 3–277 (IEKEFHRLDQ…RFSYLAVIEG (275 aa)) folds into the Tyrosine-protein phosphatase domain. Ser50 is subject to Phosphoserine. Substrate is bound by residues Asp181, 215 to 221 (CSAGIGR), and Gln262. Cys215 (phosphocysteine intermediate) is an active-site residue. The disordered stretch occupies residues 291 to 319 (WKELSNEDLDPPPEHTPPPPRPPKRTSEM).

Belongs to the protein-tyrosine phosphatase family. Non-receptor class 1 subfamily. In terms of assembly, interacts with EPHA3 (phosphorylated); dephosphorylates EPHA3 and may regulate its trafficking and function. Interacts with MET. Interacts with NCK1. Post-translationally, phosphorylated on serine and threonine residues near the N-terminus by casein kinase II (CK2).

The protein localises to the endoplasmic reticulum membrane. The catalysed reaction is O-phospho-L-tyrosyl-[protein] + H2O = L-tyrosyl-[protein] + phosphate. Functionally, may play an important role in CKII- and p60c-src-induced signal transduction cascades. May regulate the EFNA5-EPHA3 signaling pathway which modulates cell reorganization and cell-cell repulsion. May also regulate the hepatocyte growth factor receptor signaling pathway through dephosphorylation of MET. This is Tyrosine-protein phosphatase non-receptor type 1 (PTPN1) from Gallus gallus (Chicken).